The primary structure comprises 986 residues: MAEAIERSLSDIDVVAIRPASQADAKAALSVLKDAAKGSDHIAKLIASDAPLKDFLVAAFALSPFLRDTARSHPAILEALLSETLPAFLKRRIEAARVAWRGDAAGAALPDAEIMTRLRRAKREVAFAVALADLSRLFGGRETTGWLSDFAEAAVSAAIDHLLLGAHESGKFVLKDSSAPSTASGVVVLGMGKLGAGELNYSSDIDLVVFYDPQSSIITNRDDAPETFARLLRRLIRILQERTGDGYVFRTDLRLRPDPGSTPLAIPVEAAMLYYESRGQNWERAAFIKARPIAGDLEAGERFLKELTPFVFRKYLDYAAIADIHSIKRQIHAHKGHGEIAVKGHNIKLGRGGIREIEFFVQTQQLIAGGRTPALRLRQTETMLRMLAESGWIDGATAEELIEAYWFLRDVEHRIQMVHDEQTHLLPETEPELRRIAYMLGFEDTASFSNALSRVLRTVERRYAQLFEQEAKLSTETGNLVFTGQQDDPDTLETLKKLGFQRPSDIANIIRTWHYGRYRATQSVEARERLTELTPELLRVFGESRRADEAFLRFDHFLSGLPAGIQLFSLLGNNPGLLSLIVNIMSSAPRLADIIAAKPHVFDGMLEPGLLAELPTRDYLAPRIATFVGGGRHYEEVLDRLRIIAAEQRFLIGIRLLTGAITGLQAGRALTDLADLIIAAALDAVLEEVRSAHGRFPGGRVAIVGMGKLGSHELTAGSDIDLILLYDYDDEVLESDGAKPLDPVRYFTRVTQRLIAALSAPTAEGILYDVDMRLRPSGNKGPVATRITAFAKYQRTEAWTWEHLALTRARCICGDESLVGEAEAIFAEILTEKRDIAKIRKDVEEMRGLIDKEKPPKDIWDFKLIPGGLVDIEFIAQYLALVAPARGVTSPPAGTHTLEALKALGAGMMNANDLDTAAEALVLFTELSQLVRLCIDGDFDPKEAPAGLVDLVCRAGDYPDLTHLEADIRRLSKAVRRIFQGVVAAA.

Residues 1 to 471 (MAEAIERSLS…RYAQLFEQEA (471 aa)) form an adenylyl removase region. The tract at residues 475-986 (TETGNLVFTG…RIFQGVVAAA (512 aa)) is adenylyl transferase.

This sequence belongs to the GlnE family. Requires Mg(2+) as cofactor.

It catalyses the reaction [glutamine synthetase]-O(4)-(5'-adenylyl)-L-tyrosine + phosphate = [glutamine synthetase]-L-tyrosine + ADP. The catalysed reaction is [glutamine synthetase]-L-tyrosine + ATP = [glutamine synthetase]-O(4)-(5'-adenylyl)-L-tyrosine + diphosphate. Its function is as follows. Involved in the regulation of glutamine synthetase GlnA, a key enzyme in the process to assimilate ammonia. When cellular nitrogen levels are high, the C-terminal adenylyl transferase (AT) inactivates GlnA by covalent transfer of an adenylyl group from ATP to specific tyrosine residue of GlnA, thus reducing its activity. Conversely, when nitrogen levels are low, the N-terminal adenylyl removase (AR) activates GlnA by removing the adenylyl group by phosphorolysis, increasing its activity. The regulatory region of GlnE binds the signal transduction protein PII (GlnB) which indicates the nitrogen status of the cell. In Rhizobium meliloti (strain 1021) (Ensifer meliloti), this protein is Bifunctional glutamine synthetase adenylyltransferase/adenylyl-removing enzyme.